Consider the following 551-residue polypeptide: ATP-dependent DNA helicase XPD (551 aa).

Residues 1-228 (MLKLRDWQEK…KLLNQLREVV (228 aa)) form the Helicase ATP-binding domain. 29-36 (APTGSGKT) provides a ligand contact to ATP. Positions 88, 102, 105, and 137 each coordinate [4Fe-4S] cluster. The DEAH box motif lies at 180–183 (DEAH).

The protein belongs to the helicase family. RAD3/XPD subfamily. As to quaternary structure, monomer. The cofactor is [4Fe-4S] cluster.

It catalyses the reaction Couples ATP hydrolysis with the unwinding of duplex DNA at the replication fork by translocating in the 5'-3' direction. This creates two antiparallel DNA single strands (ssDNA). The leading ssDNA polymer is the template for DNA polymerase III holoenzyme which synthesizes a continuous strand.. The catalysed reaction is ATP + H2O = ADP + phosphate + H(+). Its function is as follows. ATP-dependent 5'-3' DNA helicase. Thought to be involved in nucleotide excision repair (NER) of DNA. In Sulfolobus acidocaldarius (strain ATCC 33909 / DSM 639 / JCM 8929 / NBRC 15157 / NCIMB 11770), this protein is ATP-dependent DNA helicase XPD.